The sequence spans 127 residues: Small ribosomal subunit protein uS12 (127 aa).

A 3-methylthioaspartic acid modification is found at D89.

Belongs to the universal ribosomal protein uS12 family. As to quaternary structure, part of the 30S ribosomal subunit. Contacts proteins S8 and S17. May interact with IF1 in the 30S initiation complex.

Functionally, with S4 and S5 plays an important role in translational accuracy. Interacts with and stabilizes bases of the 16S rRNA that are involved in tRNA selection in the A site and with the mRNA backbone. Located at the interface of the 30S and 50S subunits, it traverses the body of the 30S subunit contacting proteins on the other side and probably holding the rRNA structure together. The combined cluster of proteins S8, S12 and S17 appears to hold together the shoulder and platform of the 30S subunit. The sequence is that of Small ribosomal subunit protein uS12 from Akkermansia muciniphila (strain ATCC BAA-835 / DSM 22959 / JCM 33894 / BCRC 81048 / CCUG 64013 / CIP 107961 / Muc).